Reading from the N-terminus, the 674-residue chain is ATP-dependent DNA helicase Hel308 (674 aa).

Residues Gln-27 and Val-44–Thr-51 each bind ATP. The 167-residue stretch at Ile-31 to Ser-197 folds into the Helicase ATP-binding domain. Residues Asp-142–His-145 carry the DEAH box motif. The Helicase C-terminal domain maps to Asp-224–Ala-411.

Belongs to the helicase family. Hel308 subfamily. Monomer.

It carries out the reaction Couples ATP hydrolysis with the unwinding of duplex DNA by translocating in the 3'-5' direction.. It catalyses the reaction ATP + H2O = ADP + phosphate + H(+). Functionally, DNA-dependent ATPase and 3'-5' DNA helicase that may be involved in repair of stalled replication forks. In Thermoplasma volcanium (strain ATCC 51530 / DSM 4299 / JCM 9571 / NBRC 15438 / GSS1), this protein is ATP-dependent DNA helicase Hel308.